The chain runs to 492 residues: Glutamyl-tRNA(Gln) amidotransferase subunit A (492 aa).

Residues lysine 84 and serine 159 each act as charge relay system in the active site. The active-site Acyl-ester intermediate is the serine 183.

Belongs to the amidase family. GatA subfamily. Heterotrimer of A, B and C subunits.

It carries out the reaction L-glutamyl-tRNA(Gln) + L-glutamine + ATP + H2O = L-glutaminyl-tRNA(Gln) + L-glutamate + ADP + phosphate + H(+). Allows the formation of correctly charged Gln-tRNA(Gln) through the transamidation of misacylated Glu-tRNA(Gln) in organisms which lack glutaminyl-tRNA synthetase. The reaction takes place in the presence of glutamine and ATP through an activated gamma-phospho-Glu-tRNA(Gln). In Anaeromyxobacter sp. (strain K), this protein is Glutamyl-tRNA(Gln) amidotransferase subunit A.